The primary structure comprises 260 residues: Ribosomal RNA small subunit methyltransferase J (260 aa).

S-adenosyl-L-methionine-binding positions include 108–109, 124–125, and Asp178; these read RD and ER.

This sequence belongs to the methyltransferase superfamily. RsmJ family.

It is found in the cytoplasm. It catalyses the reaction guanosine(1516) in 16S rRNA + S-adenosyl-L-methionine = N(2)-methylguanosine(1516) in 16S rRNA + S-adenosyl-L-homocysteine + H(+). Specifically methylates the guanosine in position 1516 of 16S rRNA. This Ectopseudomonas mendocina (strain ymp) (Pseudomonas mendocina) protein is Ribosomal RNA small subunit methyltransferase J.